The chain runs to 178 residues: Nicotinamide-nucleotide adenylyltransferase (178 aa).

This sequence belongs to the archaeal NMN adenylyltransferase family.

The protein resides in the cytoplasm. It carries out the reaction beta-nicotinamide D-ribonucleotide + ATP + H(+) = diphosphate + NAD(+). It participates in cofactor biosynthesis; NAD(+) biosynthesis; NAD(+) from nicotinamide D-ribonucleotide: step 1/1. This Pyrobaculum arsenaticum (strain DSM 13514 / JCM 11321 / PZ6) protein is Nicotinamide-nucleotide adenylyltransferase.